Here is a 184-residue protein sequence, read N- to C-terminus: Photosystem I assembly protein Ycf4 (184 aa).

2 consecutive transmembrane segments (helical) span residues 22 to 42 (LCWAFILVLGAIGFSLVGFSS) and 64 to 84 (IVMCFYGIAGIFLGFYLWCTI).

It belongs to the Ycf4 family.

The protein resides in the plastid. It localises to the chloroplast thylakoid membrane. Seems to be required for the assembly of the photosystem I complex. The sequence is that of Photosystem I assembly protein Ycf4 from Angiopteris evecta (Mule's foot fern).